Reading from the N-terminus, the 289-residue chain is MAFRQALQLAACGLAGGSAAVLFSAVAVGKPRAGGDAEPRPAEPPAWAGGARPGPGVWDPNWDRREPLSLINVRKRNVESGEEELASKLDHYKAKATRHIFLIRHSQYHVDGSLEKDRTLTPLGREQAELTGLRLASLGLKFNKIVHSSMTRAIETTDIISRHLPGVCKVSTDLLREGAPIEPDPPVSHWKPEAVQYYEDGARIEAAFRNYIHRADARQEEDSYEIFICHANVIRYIVCRALQFPPEGWLRLSLNNGSITHLVIRPNGRVALRTLGDTGFMPPDKITRS.

Residues 1 to 6 (MAFRQA) are Mitochondrial matrix-facing. Residues 7–29 (LQLAACGLAGGSAAVLFSAVAVG) traverse the membrane as a helical segment. Residues 30-289 (KPRAGGDAEP…FMPPDKITRS (260 aa)) are Mitochondrial intermembrane-facing. The tract at residues 32 to 59 (RAGGDAEPRPAEPPAWAGGARPGPGVWD) is disordered. Residues 45–56 (PAWAGGARPGPG) show a composition bias toward low complexity. Positions 77-82 (NVESGE) are interaction with KEAP1. Residues serine 80 and serine 87 each carry the phosphoserine modification. 3 positions are modified to N6-acetyllysine: lysine 116, lysine 144, and lysine 191.

The protein belongs to the phosphoglycerate mutase family. BPG-dependent PGAM subfamily. In terms of assembly, dimer. Forms a ternary complex with NFE2L2 and KEAP1. Interacts with BCL2L1 and MAP3K5. Upon TNF-induced necrosis, forms in complex with RIPK1, RIPK3 and MLKL; the formation of this complex leads to PGAM5 phosphorylation. Isoform 2, but not isoform 1, interacts with DNM1L; this interaction leads to DNM1L dephosphorylation and activation and eventually to mitochondria fragmentation. In terms of processing, both isoform 1 and isoform 2 are phosphorylated by the RIPK1/RIPK3 complex under necrotic conditions. This phosphorylation increases PGAM5 phosphatase activity. Proteolytically cleaved by PARL in response to loss of mitochondrial membrane potential.

It localises to the mitochondrion outer membrane. The protein resides in the mitochondrion inner membrane. It carries out the reaction O-phospho-L-seryl-[protein] + H2O = L-seryl-[protein] + phosphate. The catalysed reaction is O-phospho-L-threonyl-[protein] + H2O = L-threonyl-[protein] + phosphate. Its function is as follows. Mitochondrial serine/threonine phosphatase that dephosphorylates various substrates and thus plays a role in different biological processes including cellular senescence or mitophagy. Modulates cellular senescence by regulating mitochondrial dynamics. Mechanistically, participates in mitochondrial fission through dephosphorylating DNM1L/DRP1. Additionally, dephosphorylates MFN2 in a stress-sensitive manner and consequently protects it from ubiquitination and degradation to promote mitochondrial network formation. Regulates mitophagy independent of PARKIN by interacting with and dephosphorylating FUNDC1, which interacts with LC3. Regulates anti-oxidative response by forming a tertiary complex with KEAP1 and NRF2. Regulates necroptosis by acting as a RIPK3 target and recruiting the RIPK1-RIPK3-MLKL necrosis 'attack' complex to mitochondria. The polypeptide is Serine/threonine-protein phosphatase PGAM5, mitochondrial (PGAM5) (Homo sapiens (Human)).